Consider the following 591-residue polypeptide: Peroxisome assembly protein 2 (591 aa).

Residues 1–78 (MSDSDPKPTA…TNIDTNNNTN (78 aa)) are disordered. Residues 1 to 148 (MSDSDPKPTA…TSREGTRPAF (148 aa)) lie on the Peroxisomal matrix side of the membrane. The segment covering 7–26 (KPTAAKGAAPTSIPNSTRNP) has biased composition (low complexity). The segment covering 27-54 (NPTPPNPNPNPNPISTPAPTPTATPSPP) has biased composition (pro residues). Residues 55–78 (IASSSNNGNNSTRSTNIDTNNNTN) show a composition bias toward low complexity. Residues 149–175 (RVGQVDAELLDEELVELLRGQVREALR) traverse the membrane as a helical segment. The Cytoplasmic portion of the chain corresponds to 176–196 (YVGGGGGGGGGGGGGGVGSGV). The helical transmembrane segment at 197 to 222 (AQDWEAEISLALRAVLFKLTVWDHDA) threads the bilayer. The Peroxisomal matrix portion of the chain corresponds to 223-246 (TYGAALQNLKYTDARRDGPALAPP). The helical transmembrane segment at 247–273 (SRWQKALYGLVTVGGRYLWAKWEDWLL) threads the bilayer. The Cytoplasmic segment spans residues 274–283 (EQDDGFEGPS). Residues 284–314 (PRVKRLARWTSALSTLHASAALVSFLVFLLH) form a helical membrane-spanning segment. The Peroxisomal matrix segment spans residues 315–341 (GRYRTLLDRLLRMRLAPPTSQVSREVS). The helical transmembrane segment at 342–365 (FEYLNRQLVWHAFTEFLLFVLPLV) threads the bilayer. The Cytoplasmic portion of the chain corresponds to 366-591 (GINRWRRWLA…EDGLDEDPES (226 aa)). Zn(2+) contacts are provided by C408, C411, C449, C451, C454, C457, C472, and C475. The RING-type; atypical zinc-finger motif lies at 408 to 475 (CAICYRDQNS…EGEGWPCLRC (68 aa)). A disordered region spans residues 512–591 (KAPSDHEEEE…EDGLDEDPES (80 aa)). 2 stretches are compositionally biased toward acidic residues: residues 517–537 (HEEEENEEEEEQQGELGENEG) and 575–591 (SEDYEAEEDGLDEDPES).

It belongs to the pex2/pex10/pex12 family. In terms of assembly, component of the PEX2-PEX10-PEX12 retrotranslocation channel, composed of PEX2, PEX10 and PEX12.

The protein localises to the peroxisome membrane. It carries out the reaction [E2 ubiquitin-conjugating enzyme]-S-ubiquitinyl-L-cysteine + [acceptor protein]-L-cysteine = [E2 ubiquitin-conjugating enzyme]-L-cysteine + [acceptor protein]-S-ubiquitinyl-L-cysteine.. Its pathway is protein modification; protein ubiquitination. Its function is as follows. E3 ubiquitin-protein ligase component of a retrotranslocation channel required for peroxisome organization by mediating export of the PEX5 receptor from peroxisomes to the cytosol, thereby promoting PEX5 recycling. The retrotranslocation channel is composed of PEX2, PEX10 and PEX12; each subunit contributing transmembrane segments that coassemble into an open channel that specifically allows the passage of PEX5 through the peroxisomal membrane. PEX2 also regulates peroxisome organization by acting as a E3 ubiquitin-protein ligase. PEX2 ubiquitinates PEX5 during its passage through the retrotranslocation channel: catalyzes monoubiquitination of PEX5 at 'Cys-6', a modification that acts as a signal for PEX5 extraction into the cytosol. The sequence is that of Peroxisome assembly protein 2 from Thermothelomyces thermophilus (strain ATCC 42464 / BCRC 31852 / DSM 1799) (Sporotrichum thermophile).